Here is a 326-residue protein sequence, read N- to C-terminus: MSILINNGNDYQLNSSETFNSLKSSPSSTSSLSSISTSSSSSCHKRSKAVDLNRNTSNSQNSSISTAPTTATAANTTPRKTSITIPSKLPSSWIPLRNGNIDYSRYYNTNQEEDNQEQQLQDGEPLSAPTTNNGTTKTATANANIIQDSFETIPCFSSTTNTTITSSRSNPTNSTPTSNDPSFPKQMINWNQFLQEEKDMNDNSSTINDDDKTFYMEQLNLNVGQTPNNNNNNNHGVSETENDLLPGTSKSLIAKYHYQLNYGDENENETNDVREYEYGGGESRKRKSSTTSDDRRPRRGGGGGGSRTSQVFRNTLNKFTFKPKIK.

5 disordered regions span residues 19–91 (FNSL…KLPS), 112–137 (EEDNQEQQLQDGEPLSAPTTNNGTTK), 161–184 (NTTITSSRSNPTNSTPTSNDPSFP), 222–245 (NVGQTPNNNNNNNHGVSETENDLL), and 276–326 (YEYG…PKIK). 3 stretches are compositionally biased toward low complexity: residues 21–42 (SLKSSPSSTSSLSSISTSSSSS), 53–78 (NRNTSNSQNSSISTAPTTATAANTTP), and 117–137 (EQQLQDGEPLSAPTTNNGTTK).

Functionally, virulence factor involved in pathogen-host interaction. Modulates host pro-inflammatory cytokine interleukin-1 beta (IL1B) expression. In Candida albicans (strain SC5314 / ATCC MYA-2876) (Yeast), this protein is Virulence factor CaO19.6688.